The sequence spans 34 residues: Conotoxin S4.3 (34 aa).

Q1 is subject to Pyrrolidone carboxylic acid. Residue E3 is modified to 4-carboxyglutamate. The O-linked (HexNAc...) serine glycan is linked to S7. O-linked (HexNAc...) threonine glycosylation occurs at T9. A 4-hydroxyproline mark is found at P17, P22, P31, and P32.

It belongs to the conotoxin A superfamily. Contains 3 disulfide bonds. Expressed by the venom duct.

The protein resides in the secreted. In terms of biological role, probable neurotoxin with ion channel inhibitor activity. The sequence is that of Conotoxin S4.3 from Conus striatus (Striated cone).